Consider the following 494-residue polypeptide: Cytochrome P450 2G1 (494 aa).

Residue C439 coordinates heme.

The protein belongs to the cytochrome P450 family. Requires heme as cofactor. Olfactory epithelium.

The protein resides in the endoplasmic reticulum membrane. Its subcellular location is the microsome membrane. The catalysed reaction is an organic molecule + reduced [NADPH--hemoprotein reductase] + O2 = an alcohol + oxidized [NADPH--hemoprotein reductase] + H2O + H(+). Its function is as follows. Cytochromes P450 are a group of heme-thiolate monooxygenases. This isozyme seems to be implicated in olfaction. In Oryctolagus cuniculus (Rabbit), this protein is Cytochrome P450 2G1 (CYP2G1).